Here is a 60-residue protein sequence, read N- to C-terminus: Large ribosomal subunit protein uL30 (60 aa).

It belongs to the universal ribosomal protein uL30 family. In terms of assembly, part of the 50S ribosomal subunit.

This Streptococcus pneumoniae serotype 2 (strain D39 / NCTC 7466) protein is Large ribosomal subunit protein uL30.